The primary structure comprises 414 residues: Nuclear hormone receptor family member nhr-213 (414 aa).

Positions 21–99 (IVLCKVCALS…LGMTPENVQF (79 aa)) form a DNA-binding region, nuclear receptor. 2 consecutive NR C4-type zinc fingers follow at residues 24-44 (CKVCALSAHGSHFGVLACRAC) and 62-82 (CKKGKNECPVDTAERYQCRLC). Positions 162 to 414 (SAAKKMNSLE…DFSDPDIFDC (253 aa)) constitute an NR LBD domain.

This sequence belongs to the nuclear hormone receptor family.

The protein resides in the nucleus. Its function is as follows. Orphan nuclear receptor. The chain is Nuclear hormone receptor family member nhr-213 (nhr-213) from Caenorhabditis elegans.